Here is a 147-residue protein sequence, read N- to C-terminus: MKVLLIKDVKNLGKAGEVKEVKDGYGKNFLIARGFAKLATPDVIEAWKKEQAKKAQEEAAEIEKLKQLKEKIESTKLVIKHKAGANGALFGAITNKEVAEELKKQGIEIDKKHIDIHPPIKQAGEYEIDVKLGHGIHAKLNLVVEAE.

It belongs to the bacterial ribosomal protein bL9 family.

Binds to the 23S rRNA. The polypeptide is Large ribosomal subunit protein bL9 (Nitratiruptor sp. (strain SB155-2)).